Here is a 684-residue protein sequence, read N- to C-terminus: Acetophenone carboxylase delta subunit (684 aa).

The protein belongs to the oxoprolinase family. As to quaternary structure, acetophenone carboxylase consists of five subunits; a heterooctameric subcomplex of two alpha (Apc1), two beta (Apc2), two gamma (Apc3) and two delta (Apc4) subunits assembles with the epsilon (Apc5) subunit in an unknown stoichiometry. It depends on Mg(2+) as a cofactor. The cofactor is Mn(2+).

It localises to the cytoplasm. It catalyses the reaction acetophenone + hydrogencarbonate + 2 ATP + H2O = 3-oxo-3-phenylpropanoate + 2 ADP + 2 phosphate + 2 H(+). Its activity is regulated as follows. Inhibited by zinc ions, carbamoylphosphate and beta,gamma-imido-ATP. Functionally, catalyzes the carboxylation of acetophenone to form 3-oxo-3-phenylpropanoate (benzoylacetate) in the anaerobic catabolism of ethylbenzene. Also carboxylates propiophenone at the same rate and 4-acetyl-pyridine at lower rates. In Aromatoleum aromaticum (strain DSM 19018 / LMG 30748 / EbN1) (Azoarcus sp. (strain EbN1)), this protein is Acetophenone carboxylase delta subunit (apc4).